The sequence spans 431 residues: Glutamyl-tRNA reductase (431 aa).

Substrate-binding positions include 49-52 (TCDR), Ser109, 114-116 (EPH), and Gln120. The Nucleophile role is filled by Cys50. 189–194 (GTQEMG) provides a ligand contact to NADP(+).

The protein belongs to the glutamyl-tRNA reductase family. In terms of assembly, homodimer.

The enzyme catalyses (S)-4-amino-5-oxopentanoate + tRNA(Glu) + NADP(+) = L-glutamyl-tRNA(Glu) + NADPH + H(+). The protein operates within porphyrin-containing compound metabolism; protoporphyrin-IX biosynthesis; 5-aminolevulinate from L-glutamyl-tRNA(Glu): step 1/2. Its pathway is porphyrin-containing compound metabolism; chlorophyll biosynthesis. Its function is as follows. Catalyzes the NADPH-dependent reduction of glutamyl-tRNA(Glu) to glutamate 1-semialdehyde (GSA). The polypeptide is Glutamyl-tRNA reductase (Rhodospirillum rubrum (strain ATCC 11170 / ATH 1.1.1 / DSM 467 / LMG 4362 / NCIMB 8255 / S1)).